The chain runs to 1057 residues: Structural maintenance of chromosomes protein 6B (1057 aa).

Positions 22-1047 (ILRIKVENFM…ISMVKSHERI (1026 aa)) constitute a Zinc-hook domain. 49–56 (GQNGSGKS) lines the ATP pocket. Residues 135–448 (KVSNKRDELR…NDLKKHQTNK (314 aa)) are a coiled coil. Positions 449-632 (VTAFGGDRVI…PPLSRRPSRL (184 aa)) are flexible hinge. The stretch at 633 to 904 (CASFDDQIKD…QDHREKLMAC (272 aa)) forms a coiled coil. Residues 818 to 828 (KNKRKESDQKA) are compositionally biased toward basic and acidic residues. The disordered stretch occupies residues 818-845 (KNKRKESDQKASEICPESEIESLGPWDG).

It belongs to the SMC family. SMC6 subfamily. In terms of assembly, forms a heterodimer with SMC5. The SMC5-SMC6 complex is composed of the SMC5 and SMC6 heterodimer attached via their hinge domain and from the non-SMC subunit NSE4A or NSE4B. In terms of tissue distribution, expressed in seedlings, rosette leaves and floral buds.

The protein localises to the nucleus. It localises to the chromosome. In terms of biological role, core component of the SMC5-SMC6 complex that promotes sister chromatid alignment after DNA damage and facilitates double-stranded DNA breaks (DSBs) repair via homologous recombination between sister chromatids. The sequence is that of Structural maintenance of chromosomes protein 6B (SMC6B) from Arabidopsis thaliana (Mouse-ear cress).